The chain runs to 314 residues: Formylglycine-generating enzyme (314 aa).

The span at 1–20 (MAVAAPSPAAAAEPGPAARP) shows a compositional bias: low complexity. Residues 1–31 (MAVAAPSPAAAAEPGPAARPRSTRGQVRLPG) form a disordered region. Ca(2+) contacts are provided by Asn194, Ile195, Asp208, and His210. 2 residues coordinate Cu(2+): Cys272 and Cys277.

This sequence belongs to the sulfatase-modifying factor family. The cofactor is Cu(2+).

The enzyme catalyses L-cysteinyl-[sulfatase] + 2 a thiol + O2 = an organic disulfide + 3-oxo-L-alanyl-[sulfatase] + hydrogen sulfide + H2O + H(+). It functions in the pathway protein modification; sulfatase oxidation. Functionally, oxidase that catalyzes the conversion of cysteine to 3-oxoalanine on target proteins. 3-oxoalanine modification, which is also named formylglycine (fGly), occurs in the maturation of arylsulfatases and some alkaline phosphatases that use the hydrated form of 3-oxoalanine as a catalytic nucleophile. This Streptomyces coelicolor (strain ATCC BAA-471 / A3(2) / M145) protein is Formylglycine-generating enzyme.